Reading from the N-terminus, the 158-residue chain is Dihydroneopterin triphosphate diphosphatase (158 aa).

Substrate is bound by residues K14, R36, and T47. A Nudix hydrolase domain is found at 14 to 153 (KNNQSVLVVI…NNAEAIKKYL (140 aa)). Residues 48 to 69 (GTIESDETPKKTAIRELWEEVR) carry the Nudix box motif. 2 residues coordinate Mg(2+): E63 and E67. 88 to 91 (FEIF) is a binding site for substrate. E124 contacts Mg(2+). Position 142 (S142) interacts with substrate.

It belongs to the Nudix hydrolase family. Requires Mg(2+) as cofactor.

It carries out the reaction 7,8-dihydroneopterin 3'-triphosphate + H2O = 7,8-dihydroneopterin 3'-phosphate + diphosphate + H(+). In terms of biological role, catalyzes the hydrolysis of dihydroneopterin triphosphate to dihydroneopterin monophosphate and pyrophosphate. Required for efficient folate biosynthesis. Can also hydrolyze nucleoside triphosphates with a preference for dATP. The polypeptide is Dihydroneopterin triphosphate diphosphatase (nudB) (Haemophilus influenzae (strain ATCC 51907 / DSM 11121 / KW20 / Rd)).